The sequence spans 296 residues: Small ribosomal subunit biogenesis GTPase RsgA (296 aa).

Positions 63–224 (RNQLVRPPVA…IADTPGFSSY (162 aa)) constitute a CP-type G domain. GTP is bound by residues 112-115 (SKTD) and 167-175 (GQTGAGKST). Cysteine 248, cysteine 253, histidine 255, and cysteine 261 together coordinate Zn(2+).

This sequence belongs to the TRAFAC class YlqF/YawG GTPase family. RsgA subfamily. In terms of assembly, monomer. Associates with 30S ribosomal subunit, binds 16S rRNA. It depends on Zn(2+) as a cofactor.

The protein resides in the cytoplasm. Functionally, one of several proteins that assist in the late maturation steps of the functional core of the 30S ribosomal subunit. Helps release RbfA from mature subunits. May play a role in the assembly of ribosomal proteins into the subunit. Circularly permuted GTPase that catalyzes slow GTP hydrolysis, GTPase activity is stimulated by the 30S ribosomal subunit. The protein is Small ribosomal subunit biogenesis GTPase RsgA of Limosilactobacillus reuteri (strain DSM 20016) (Lactobacillus reuteri).